The chain runs to 336 residues: Torsin-1B (336 aa).

The first 24 residues, Met1–Ala24, serve as a signal peptide directing secretion. Asn64 is a glycosylation site (N-linked (GlcNAc...) asparagine). Residue Gly109 to Asn116 participates in ATP binding. N-linked (GlcNAc...) asparagine glycosylation occurs at Asn165.

It belongs to the ClpA/ClpB family. Torsin subfamily. As to quaternary structure, homohexamer. Interacts with TOR1A; the interaction may be specific of neural tissues. Interacts with TOR1AIP1; TOR1AIP1 is required for TOR1B location on the nuclear membrane. Interacts (ATP-bound) with TOR1AIP2; important for endoplasmic reticulum integrity. N-glycosylated. Widely expressed with low levels in brain.

The protein resides in the endoplasmic reticulum lumen. Its subcellular location is the nucleus membrane. It carries out the reaction ATP + H2O = ADP + phosphate + H(+). May serve as a molecular chaperone assisting in the proper folding of secreted and/or membrane proteins. Plays a role in non-neural cells nuclear envelope and endoplasmic reticulum integrity. May have a redundant function with TOR1A in non-neural tissues. This is Torsin-1B (TOR1B) from Homo sapiens (Human).